The sequence spans 259 residues: Exotoxin A regulatory protein (259 aa).

Its subcellular location is the cell inner membrane. In terms of biological role, positive regulation of toxA gene transcription. The sequence is that of Exotoxin A regulatory protein (toxR) from Pseudomonas aeruginosa (strain ATCC 15692 / DSM 22644 / CIP 104116 / JCM 14847 / LMG 12228 / 1C / PRS 101 / PAO1).